A 330-amino-acid chain; its full sequence is Phytanoyl-CoA hydroxylase-interacting protein (330 aa).

A Fibronectin type-III domain is found at 6-115 (TPHSIEINNI…ETVEFCTGDY (110 aa)). Asparagine 14 and asparagine 325 each carry an N-linked (GlcNAc...) asparagine glycan.

This sequence belongs to the PHYHIP family. In terms of assembly, interacts with PHYH and ADGRB1. In terms of tissue distribution, highly expressed in the brain.

Functionally, its interaction with PHYH suggests a role in the development of the central system. This is Phytanoyl-CoA hydroxylase-interacting protein (PHYHIP) from Homo sapiens (Human).